Here is a 470-residue protein sequence, read N- to C-terminus: Glutamyl-tRNA reductase (470 aa).

Residues 49-52 (TCNR), serine 109, 114-116 (ESQ), and glutamine 120 each bind substrate. Cysteine 50 (nucleophile) is an active-site residue. NADP(+) is bound at residue 223–228 (GAGAVG).

The protein belongs to the glutamyl-tRNA reductase family. As to quaternary structure, homodimer.

The catalysed reaction is (S)-4-amino-5-oxopentanoate + tRNA(Glu) + NADP(+) = L-glutamyl-tRNA(Glu) + NADPH + H(+). It participates in porphyrin-containing compound metabolism; protoporphyrin-IX biosynthesis; 5-aminolevulinate from L-glutamyl-tRNA(Glu): step 1/2. Its function is as follows. Catalyzes the NADPH-dependent reduction of glutamyl-tRNA(Glu) to glutamate 1-semialdehyde (GSA). This Frankia alni (strain DSM 45986 / CECT 9034 / ACN14a) protein is Glutamyl-tRNA reductase.